The chain runs to 44 residues: Photosystem I reaction center subunit IX (44 aa).

Residues 7-27 (YLSTAPVLAISWLIFVAGLLI) form a helical membrane-spanning segment.

It belongs to the PsaJ family.

It localises to the plastid. The protein localises to the chloroplast thylakoid membrane. Its function is as follows. May help in the organization of the PsaE and PsaF subunits. The sequence is that of Photosystem I reaction center subunit IX from Larix decidua (European larch).